Here is a 474-residue protein sequence, read N- to C-terminus: Probable phenylalanine--tRNA ligase alpha subunit (474 aa).

The contains the major tRNA-Phe binding sites stretch occupies residues 1–150 (MSLSQKILEL…KRKLIYQAKE (150 aa)). Residues Thr308, 350-352 (QVE), and Tyr390 each bind L-phenylalanine. Mg(2+) is bound at residue Glu392. Phe416 serves as a coordination point for L-phenylalanine.

It belongs to the class-II aminoacyl-tRNA synthetase family. Phe-tRNA synthetase alpha subunit type 2 subfamily. Tetramer of two alpha and two beta subunits. Mg(2+) is required as a cofactor.

The protein localises to the cytoplasm. It catalyses the reaction tRNA(Phe) + L-phenylalanine + ATP = L-phenylalanyl-tRNA(Phe) + AMP + diphosphate + H(+). This chain is Probable phenylalanine--tRNA ligase alpha subunit, found in Vairimorpha ceranae (strain BRL01) (Microsporidian parasite).